The primary structure comprises 496 residues: 1-aminocyclopropane-1-carboxylate synthase 4 (496 aa).

K300 carries the N6-(pyridoxal phosphate)lysine modification.

The protein belongs to the class-I pyridoxal-phosphate-dependent aminotransferase family. Pyridoxal 5'-phosphate is required as a cofactor. In terms of tissue distribution, expressed in leaves. Expressed in shoots and leaf blades. Expressed at low levels in leaf sheaths.

It carries out the reaction S-adenosyl-L-methionine = 1-aminocyclopropane-1-carboxylate + S-methyl-5'-thioadenosine + H(+). It participates in alkene biosynthesis; ethylene biosynthesis via S-adenosyl-L-methionine; ethylene from S-adenosyl-L-methionine: step 1/2. Its function is as follows. Catalyzes the formation of 1-aminocyclopropane-1-carboxylate, a direct precursor of ethylene in higher plants. This is 1-aminocyclopropane-1-carboxylate synthase 4 from Oryza sativa subsp. japonica (Rice).